We begin with the raw amino-acid sequence, 370 residues long: Acyl-CoA:lysophosphatidylglycerol acyltransferase 1 (370 aa).

A helical transmembrane segment spans residues 22–42 (FAFMVANNLVAIPSYICYVII). The short motif at 101 to 106 (HQATGD) is the HXXXXD motif element. The helical transmembrane segment at 342–362 (MWIFLIQSFAFLSGYLWYHII) threads the bilayer.

This sequence belongs to the 1-acyl-sn-glycerol-3-phosphate acyltransferase family. In terms of tissue distribution, ubiquitous. Expressed in heart, kidney, liver, skin, intestine, and thymus. Highest expression is detected in brain and testis.

The protein resides in the endoplasmic reticulum membrane. The catalysed reaction is a 2-acyl-sn-glycero-3-phosphoethanolamine + octadecanoyl-CoA = 1-octadecanoyl-2-acyl-sn-glycero-3-phosphoethanolamine + CoA. It carries out the reaction 2-(9Z-octadecenoyl)-sn-glycero-3-phosphoethanolamine + octadecanoyl-CoA = 1-octadecanoyl-2-(9Z-octadecenoyl)-sn-glycero-3-phosphoethanolamine + CoA. It catalyses the reaction a 2-acyl-sn-glycero-3-phosphoethanolamine + hexadecanoyl-CoA = 1-hexadecanoyl-2-acyl-sn-glycero-3-phosphoethanolamine + CoA. The enzyme catalyses 2-(9Z-octadecenoyl)-sn-glycero-3-phosphoethanolamine + hexadecanoyl-CoA = 1-hexadecanoyl-2-(9Z-octadecenoyl)-sn-glycero-3-phosphoethanolamine + CoA. The catalysed reaction is 1-tetradecanoyl-sn-glycero-3-phospho-(1'-sn-glycerol) + hexadecanoyl-CoA = 1-tetradecanoyl-2-hexadecanoyl-sn-glycero-3-phospho-(1'-sn-glycerol) + CoA. It carries out the reaction 1-hexadecanoyl-sn-glycero-3-phospho-(1'-sn-glycerol) + dodecanoyl-CoA = 1-hexadecanoyl-2-dodecanoyl-sn-glycero-3-phospho-(1'-sn-glycerol) + CoA. It catalyses the reaction 1-hexadecanoyl-sn-glycero-3-phospho-(1'-sn-glycerol) + hexadecanoyl-CoA = 1,2-dihexadecanoyl-sn-glycero-3-phospho-(1'-sn-glycerol) + CoA. The enzyme catalyses 1-hexadecanoyl-sn-glycero-3-phospho-(1'-sn-glycerol) + octadecanoyl-CoA = 1-hexadecanoyl-2-octadecanoyl-sn-glycero-3-phospho-(1'-sn-glycerol) + CoA. The catalysed reaction is 1-octadecanoyl-sn-glycero-3-phospho-(1'-sn-glycerol) + hexadecanoyl-CoA = 1-octadecanoyl-2-hexadecanoyl-sn-glycero-3-phospho-(1'-sn-glycerol) + CoA. It carries out the reaction 1-(9Z-octadecenoyl)-sn-glycero-3-phospho-(1'-sn-glycerol) + dodecanoyl-CoA = 1-(9Z-octadecenoyl)-2-dodecanoyl-sn-glycero-3-phospho-(1'-sn-glycerol) + CoA. It catalyses the reaction 1-hexadecanoyl-sn-glycero-3-phospho-(1'-sn-glycerol) + (9Z)-octadecenoyl-CoA = 1-hexadecanoyl-2-(9Z-octadecenoyl)-sn-glycero-3-phospho-(1'-sn-glycerol) + CoA. The enzyme catalyses 1-(9Z-octadecenoyl)-sn-glycero-3-phospho-(1'-sn-glycerol) + hexadecanoyl-CoA = 1-(9Z-octadecenoyl)-2-hexadecanoyl-sn-glycero-3-phospho-(1'-sn-glycerol) + CoA. The catalysed reaction is 1-(9Z-octadecenoyl)-sn-glycero-3-phospho-(1'-sn-glycerol) + (9Z)-octadecenoyl-CoA = 1,2-di-(9Z-octadecenoyl)-sn-glycero-3-phospho-(1'-sn-glycerol) + CoA. It carries out the reaction a 2-acylglycerol + an acyl-CoA = a 1,2-diacylglycerol + CoA. It catalyses the reaction a 2-acylglycerol + hexadecanoyl-CoA = a 1-hexadecanoyl-2-acylglycerol + CoA. The enzyme catalyses a 1-acylglycerol + hexadecanoyl-CoA = an hexadecanoyl-acylglycerol + CoA. The catalysed reaction is a 2-acyl-sn-glycero-3-phosphocholine + an acyl-CoA = a 1,2-diacyl-sn-glycero-3-phosphocholine + CoA. It carries out the reaction 2-(9Z-octadecenoyl)-sn-glycero-3-phosphocholine + octadecanoyl-CoA = 1-octadecanoyl-2-(9Z-octadecenoyl)-sn-glycero-3-phosphocholine + CoA. It catalyses the reaction 2-(9Z,12Z-octadecadienoyl)-sn-glycero-3-phosphocholine + octadecanoyl-CoA = 1-octadecanoyl-2-(9Z,12Z)-octadecadienoyl-sn-glycero-3-phosphocholine + CoA. The enzyme catalyses 2-(5Z,8Z,11Z,14Z)-eicosatetraenoyl-sn-glycero-3-phosphocholine + octadecanoyl-CoA = 1-octadecanoyl-2-(5Z,8Z,11Z,14Z-eicosatetraenoyl)-sn-glycero-3-phosphocholine + CoA. The catalysed reaction is 2-(9Z-octadecenoyl)-sn-glycero-3-phosphocholine + hexadecanoyl-CoA = 1-hexadecanoyl-2-(9Z-octadecenoyl)-sn-glycero-3-phosphocholine + CoA. It carries out the reaction 2-(9Z-octadecenoyl)-sn-glycero-3-phospho-L-serine + hexadecanoyl-CoA = 1-hexadecanoyl-2-(9Z-octadecenoyl)-sn-glycero-3-phospho-L-serine + CoA. It catalyses the reaction 2-(4Z,7Z,10Z,13Z,16Z,19Z-docosahexaenoyl)-sn-glycero-3-phosphocholine + octadecanoyl-CoA = 1-octadecanoyl-2-(4Z,7Z,10Z,13Z,16Z,19Z-docosahexaenoyl)-sn-glycero-3-phosphocholine + CoA. The enzyme catalyses 1-(9Z-octadecenoyl)-sn-glycero-3-phospho-L-serine + octadecanoyl-CoA = 1-(9Z-octadecenoyl)-2-octadecanoyl-sn-glycero-3-phospho-L-serine + CoA. The catalysed reaction is a 2-acyl-sn-glycero-3-phosphoethanolamine + a fatty acyl-CoA = a 1,2-diacyl-sn-glycero-3-phosphoethanolamine + CoA. Lysophospholipid acyltransferase involved in fatty acyl chain remodeling of glycerophospholipids in the endoplasmic reticulum membrane. Selectively catalyzes the transfer and esterification of saturated long-chain fatty acids from acyl-CoA to the sn-1 position of 1-lyso-2-acyl phosphatidylethanolamines (1-lyso-PE, LPE), with a preference for stearoyl CoA over palmitoyl CoA as acyl donor. Acts in concert with an unknown phospholipase A1 to convert palmitate PE species into stearate ones. Provides substrates to the PE methylation pathway, controlling stearate/palmitate composition of PE and phosphatidylcholine (PC) species with an overall impact on de novo hepatic lipid synthesis, body fat content and life span. Can acylate lysophosphatidylglycerols (LPG) using various saturated fatty acyl-CoAs as acyl donors. Can also acylate monoacylglycerols with a preference for 2-monoacylglycerols over 1-monoacylglycerols. Has no activity toward lysophosphatidic acids (LPA) and lysophosphatidylcholines (LPC). The protein is Acyl-CoA:lysophosphatidylglycerol acyltransferase 1 of Mus musculus (Mouse).